The following is a 187-amino-acid chain: MMNVDLDKIQQAVRMILEAVGDDPDREGVLDTPKRVAKMYAEVFEGMHIDEEQYFETVFSEDHEEMVLVKDIPFYSMCEHHLVPFFGKAHVAYVPRGGRVVGLSKLARAVDTVAKRPQLQERITATVADSIMRKLDPHGVVVVVEAEHMCMTMRGVKKPGSKTITSAVRGMFEKDAAARAEVISLMR.

The Zn(2+) site is built by Cys78, His81, and Cys150.

This sequence belongs to the GTP cyclohydrolase I family. As to quaternary structure, homomer.

It carries out the reaction GTP + H2O = 7,8-dihydroneopterin 3'-triphosphate + formate + H(+). The protein operates within cofactor biosynthesis; 7,8-dihydroneopterin triphosphate biosynthesis; 7,8-dihydroneopterin triphosphate from GTP: step 1/1. The protein is GTP cyclohydrolase 1 of Brevibacillus brevis (strain 47 / JCM 6285 / NBRC 100599).